Here is a 528-residue protein sequence, read N- to C-terminus: CTD kinase subunit alpha (528 aa).

Polar residues predominate over residues 1 to 15 (MSYNNGNTYSKSYSR). The tract at residues 1–148 (MSYNNGNTYS…NTSNDIKNGY (148 aa)) is disordered. Residue Ser14 is modified to Phosphoserine; by autocatalysis. The Nuclear localization signal motif lies at 37-44 (PPKRIRTD). A compositionally biased stretch (polar residues) spans 45 to 103 (SGYQSNMDNISSHRVNSNDQPGHTKSRGNNNLSRYNDTSFQTSSRYQGSRYNNNNTSYE). Positions 104-118 (NRPKSIKRDETKAEF) are enriched in basic and acidic residues. Over residues 134–144 (YNNSSNTSNDI) the composition is skewed to polar residues. One can recognise a Protein kinase domain in the interval 183–469 (YLRIMQVGEG…ATEALQSDYF (287 aa)). Residues 189–197 (VGEGTYGKV) and Lys212 contribute to the ATP site. Asp306 serves as the catalytic Proton acceptor. A Phosphothreonine modification is found at Thr338. Residues 497 to 528 (QKRPNILSTNTNNKGNGNSNNNNNNNNDDDDK) form a disordered region. Residues 504 to 522 (STNTNNKGNGNSNNNNNNN) are compositionally biased toward low complexity.

Belongs to the protein kinase superfamily. CMGC Ser/Thr protein kinase family. CDC2/CDKX subfamily. CTDK-I consists of three subunits, CTK1, CTK2 and CTK3 (also called alpha, beta and gamma). Interacts directly with the CTK2 and CTK3 subunits, this interaction is required for kinase activity. Interacts with RNA polymerase I. Interacts with SNF1, but only at low glucose concentrations. Interacts with translating ribosomes. In terms of processing, phosphorylated on Thr-338 by CAK1. Phosphorylation is essential for the elevated CTD Ser-2 phosphorylation and required to activate transcription of stationary-phase genes during the diauxic shift.

The protein resides in the nucleus. Its subcellular location is the nucleolus. It is found in the cytoplasm. It carries out the reaction [DNA-directed RNA polymerase] + ATP = phospho-[DNA-directed RNA polymerase] + ADP + H(+). Its function is as follows. Catalytic subunit of the CTDK-I complex, which hyperphosphorylates the C-terminal heptapeptide repeat domain (CTD) of the largest RNA polymerase II subunit. CTDK-I phosphorylates 'Ser-5' if the CTD substrate is not phosphorylated at 'Ser-5', but will phosphorylate 'Ser-2' of a CTD substrate if 'Ser-5' is already phosphorylated. CTDK-I is also more reactive toward substrates that are prephosphorylated at 'Ser-2' or 'Ser-5' compared with an unphosphorylated CTD substrate, therefore efficiently creating doubly phosphorylated CTD repeats. Involved in RNA polymerase II transcriptional elongation, and through PTI1, pre-mRNA 3'-end processing. Participates in both positive and negative regulation of CTD phosphorylation. Required for DNA damage induced transcription, including the expression of the RNR genes, and reprogramming of gene expression upon amino acid starvation. Required for SET2 mediated H3K36 methylation. Also regulates H3K4 methylation. Controls the maintenance of suppressive chromatin in the coding regions of genes by both promoting H3K36 methylation, which leads to histone deacetylation, and catalyzing phosphorylation of the CTD required to localize H3K4 chromatin modification specifically to the 5' ends of genes, thereby creating a boundary for H3K4 methylation that prevents a mark associated with transcriptional initiation from spreading into the bodies of genes. Involved in RNA polymerase I transcription. Involved in telomere maintenance. Acts together with SNF1 to induce GSY2 transcription in response to glucose limitation. Involved in the adaptation to alternative carbon sources, including galactose, glycerol and ethanol, but not raffinose. Required for the integrity of the rDNA locus. Functions in translation elongation by enhancing decoding fidelity. Needed for translational accuracy by phosphorylating RPS2. The protein is CTD kinase subunit alpha (CTK1) of Saccharomyces cerevisiae (strain ATCC 204508 / S288c) (Baker's yeast).